Reading from the N-terminus, the 278-residue chain is Large ribosomal subunit protein uL2 (278 aa).

The segment at 223 to 278 is disordered; sequence GSVMNPNDHPHGGGEGKAPIGHPSPMSPWGKKTLGKKTRDHKAKSEKFIVRHRRAK. Over residues 255–264 the composition is skewed to basic residues; the sequence is TLGKKTRDHK.

Belongs to the universal ribosomal protein uL2 family. In terms of assembly, part of the 50S ribosomal subunit. Forms a bridge to the 30S subunit in the 70S ribosome.

Its function is as follows. One of the primary rRNA binding proteins. Required for association of the 30S and 50S subunits to form the 70S ribosome, for tRNA binding and peptide bond formation. It has been suggested to have peptidyltransferase activity; this is somewhat controversial. Makes several contacts with the 16S rRNA in the 70S ribosome. This chain is Large ribosomal subunit protein uL2, found in Lacticaseibacillus paracasei (strain ATCC 334 / BCRC 17002 / CCUG 31169 / CIP 107868 / KCTC 3260 / NRRL B-441) (Lactobacillus paracasei).